We begin with the raw amino-acid sequence, 321 residues long: Flagellin C (321 aa).

This sequence belongs to the bacterial flagellin family.

It is found in the secreted. It localises to the bacterial flagellum. Its function is as follows. Flagellin is the subunit protein which polymerizes to form the filaments of bacterial flagella. The chain is Flagellin C (flaC) from Rhizobium meliloti (strain 1021) (Ensifer meliloti).